We begin with the raw amino-acid sequence, 134 residues long: Small ribosomal subunit protein uS9 (134 aa).

The interval 109–134 (DARRTEPHKPSKSSKGPRAKRQKSYR) is disordered. Residues 118–134 (PSKSSKGPRAKRQKSYR) show a composition bias toward basic residues.

Belongs to the universal ribosomal protein uS9 family.

The protein is Small ribosomal subunit protein uS9 of Methanococcus maripaludis (strain C5 / ATCC BAA-1333).